The sequence spans 635 residues: DNA mismatch repair protein MutL (635 aa).

The segment at 359-399 (GTNKYAQPEAAKSSAAEQAVARERSSARERAAPAYKEDHPY) is disordered. Positions 364–377 (AQPEAAKSSAAEQA) are enriched in low complexity. Positions 378–399 (VARERSSARERAAPAYKEDHPY) are enriched in basic and acidic residues.

Belongs to the DNA mismatch repair MutL/HexB family.

Functionally, this protein is involved in the repair of mismatches in DNA. It is required for dam-dependent methyl-directed DNA mismatch repair. May act as a 'molecular matchmaker', a protein that promotes the formation of a stable complex between two or more DNA-binding proteins in an ATP-dependent manner without itself being part of a final effector complex. This chain is DNA mismatch repair protein MutL, found in Yersinia pseudotuberculosis serotype O:1b (strain IP 31758).